Here is a 176-residue protein sequence, read N- to C-terminus: NAD(P)H-quinone oxidoreductase subunit 6, chloroplastic (176 aa).

The next 5 membrane-spanning stretches (helical) occupy residues 10 to 30 (FLLV…VLLP), 33 to 53 (IYSA…YILL), 61 to 81 (AQLL…VMFM), 92 to 112 (LWTI…ISLI), and 152 to 172 (FFLP…GAIA).

The protein belongs to the complex I subunit 6 family. As to quaternary structure, NDH is composed of at least 16 different subunits, 5 of which are encoded in the nucleus.

Its subcellular location is the plastid. It is found in the chloroplast thylakoid membrane. It catalyses the reaction a plastoquinone + NADH + (n+1) H(+)(in) = a plastoquinol + NAD(+) + n H(+)(out). The enzyme catalyses a plastoquinone + NADPH + (n+1) H(+)(in) = a plastoquinol + NADP(+) + n H(+)(out). In terms of biological role, NDH shuttles electrons from NAD(P)H:plastoquinone, via FMN and iron-sulfur (Fe-S) centers, to quinones in the photosynthetic chain and possibly in a chloroplast respiratory chain. The immediate electron acceptor for the enzyme in this species is believed to be plastoquinone. Couples the redox reaction to proton translocation, and thus conserves the redox energy in a proton gradient. This is NAD(P)H-quinone oxidoreductase subunit 6, chloroplastic (ndhG) from Coffea arabica (Arabian coffee).